The primary structure comprises 105 residues: Large ribosomal subunit protein uL24 (105 aa).

This sequence belongs to the universal ribosomal protein uL24 family. Part of the 50S ribosomal subunit.

Its function is as follows. One of two assembly initiator proteins, it binds directly to the 5'-end of the 23S rRNA, where it nucleates assembly of the 50S subunit. In terms of biological role, one of the proteins that surrounds the polypeptide exit tunnel on the outside of the subunit. The polypeptide is Large ribosomal subunit protein uL24 (Francisella tularensis subsp. tularensis (strain FSC 198)).